The sequence spans 302 residues: GLABROUS1 enhancer-binding protein (302 aa).

Disordered stretches follow at residues 1 to 55 (MVTP…MKKK) and 158 to 229 (GQGD…NDDD). Position 27 is a phosphoserine (S27). A compositionally biased stretch (basic and acidic residues) spans 180-195 (RTNESGEEMLKEHEEE). Positions 208–217 (AKTTENGTSS) are enriched in polar residues. The tract at residues 270 to 291 (LSDEWKALCVEETRFNIKKLRF) is non-canonical leucine-zipper.

It belongs to the GeBP family. As to quaternary structure, homo- and heterodimers. Interacts with GPL1, GPL2 and GPL3. Interacts with KIN10, KIN11 and FLZ4. Interacts with KIN10 and KIN11 via its N-terminal part. Interacts with GPL1 and GPL3 via its C-terminal part. In terms of tissue distribution, expressed in the apical meristem and young leaf primordia. Not detected in emerging or mature leaves. Detected in the vascular tissues of cotyledons and leaves, in hydathodes and at the base of flowers and siliques, but not in roots.

The protein localises to the nucleus. Its subcellular location is the nucleolus. DNA-binding protein, which specifically recognizes the GL1 enhancer sequence. May be involved in leaf initiation. May play redundant roles with GPL1 and GPL2 in cytokinin responses by regulating the transcript levels of type-A ARR response genes. Involved in stress responses. Plays a repressive role in cell expansion by counteracting the positive role of CPR5 in this process, but does not regulate cell proliferation or endoreduplication. May play a role in plant defense. The protein is GLABROUS1 enhancer-binding protein of Arabidopsis thaliana (Mouse-ear cress).